The sequence spans 391 residues: O-methyltransferase ATR12 (391 aa).

S-adenosyl-L-methionine contacts are provided by residues 233 to 234, aspartate 259, and 279 to 280; these read GG and DF. Histidine 299 functions as the Proton acceptor in the catalytic mechanism.

This sequence belongs to the class I-like SAM-binding methyltransferase superfamily. Cation-independent O-methyltransferase family. COMT subfamily.

It participates in mycotoxin biosynthesis. Its function is as follows. O-methyltransferase; part of the core atranone cluster (CAC) which products are predicted to catalyze most or all steps of mycotoxin atranone synthesis, starting from geranylgeranyl pyrophosphate (GGPP). The initial cyclization of GGPP to dolabellane is probably performed by the terpene cyclase ATR13. The Baeyer-Villiger oxidation near the end of the atranone synthesis, which converts atranones D and E to atranones F and G is predicted to be catalyzed by the monooxygenase ATR8. Of the CAC's other predicted gene products, the reducing PKS ATR6 might synthesize a polyketide chain. This polyketide is probably transferred onto the atranone backbone by the polyketide transferase ATR5. Other predicted CAC products include 4 oxygenases (ATR2, ATR3, ATR4, and ATR14), 3 short-chain reductases (ATR7, ATR9, and ATR10), and a methyltransferase (ATR12). These may all be involved in the various steps of atranone biosynthesis, although their specific roles must await experimental determination. The sequence is that of O-methyltransferase ATR12 from Stachybotrys chlorohalonatus (strain IBT 40285).